Consider the following 335-residue polypeptide: Biotin synthase (335 aa).

The Radical SAM core domain maps to 47-276 (FYGKKVKLNM…SKEIRISGGR (230 aa)). Residues cysteine 65, cysteine 69, and cysteine 72 each coordinate [4Fe-4S] cluster. Cysteine 109, cysteine 141, cysteine 201, and arginine 271 together coordinate [2Fe-2S] cluster.

Belongs to the radical SAM superfamily. Biotin synthase family. Homodimer. Requires [4Fe-4S] cluster as cofactor. The cofactor is [2Fe-2S] cluster.

The enzyme catalyses (4R,5S)-dethiobiotin + (sulfur carrier)-SH + 2 reduced [2Fe-2S]-[ferredoxin] + 2 S-adenosyl-L-methionine = (sulfur carrier)-H + biotin + 2 5'-deoxyadenosine + 2 L-methionine + 2 oxidized [2Fe-2S]-[ferredoxin]. Its pathway is cofactor biosynthesis; biotin biosynthesis; biotin from 7,8-diaminononanoate: step 2/2. Catalyzes the conversion of dethiobiotin (DTB) to biotin by the insertion of a sulfur atom into dethiobiotin via a radical-based mechanism. In Bacillus subtilis subsp. natto, this protein is Biotin synthase.